The sequence spans 353 residues: Heterogeneous nuclear ribonucleoprotein D0 (353 aa).

The interval Met-1 to Thr-89 is disordered. An N-acetylserine modification is found at Ser-2. A compositionally biased stretch (low complexity) spans Ala-11 to Gly-42. The segment covering Ser-43–Gly-56 has biased composition (gly residues). The segment covering Glu-62–Asn-71 has biased composition (basic and acidic residues). Ser-69 is modified (phosphoserine). Residue Lys-70 forms a Glycyl lysine isopeptide (Lys-Gly) (interchain with G-Cter in SUMO2) linkage. Phosphoserine occurs at positions 78, 80, and 81. A Phosphothreonine modification is found at Thr-89. 2 consecutive RRM domains span residues Trp-95 to Glu-177 and Lys-180 to Glu-259. Lys-117 is modified (N6-methyllysine). At Thr-125 the chain carries Phosphothreonine. Lys-127 participates in a covalent cross-link: Glycyl lysine isopeptide (Lys-Gly) (interchain with G-Cter in SUMO2). Residue Lys-163 is modified to N6-acetyllysine. Residue Ser-188 is modified to Phosphoserine. Thr-191 carries the post-translational modification Phosphothreonine. Lys-195 participates in a covalent cross-link: Glycyl lysine isopeptide (Lys-Gly) (interchain with G-Cter in SUMO2). N6-acetyllysine is present on residues Lys-241 and Lys-249. Position 269 is a phosphoserine (Ser-269). Omega-N-methylarginine occurs at positions 270, 276, 278, and 280. Arg-343 is modified (asymmetric dimethylarginine; alternate). Position 343 is a dimethylated arginine; alternate (Arg-343). An Omega-N-methylarginine; alternate modification is found at Arg-343.

Identified in a IGF2BP1-dependent mRNP granule complex containing untranslated mRNAs. Part of a complex associated with the FOS mCRD domain and consisting of PABPC1, PAIP1, CSDE1/UNR and SYNCRIP. Interacts with IGF2BP2. Interacts with GTPBP1. Interacts with EIF4G1; the interaction requires RNA. Interacts with EIF3B and RPS3. Methylated by PRMT1, in an insulin-dependent manner. The PRMT1-mediated methylation regulates its phosphorylation. Post-translationally, arg-343 is dimethylated, probably to asymmetric dimethylarginine.

Its subcellular location is the nucleus. It is found in the cytoplasm. Binds with high affinity to RNA molecules that contain AU-rich elements (AREs) found within the 3'-UTR of many proto-oncogenes and cytokine mRNAs. Also binds to double- and single-stranded DNA sequences in a specific manner and functions a transcription factor. Each of the RNA-binding domains specifically can bind solely to a single-stranded non-monotonous 5'-UUAG-3' sequence and also weaker to the single-stranded 5'-TTAGGG-3' telomeric DNA repeat. Binds RNA oligonucleotides with 5'-UUAGGG-3' repeats more tightly than the telomeric single-stranded DNA 5'-TTAGGG-3' repeats. Binding of RRM1 to DNA inhibits the formation of DNA quadruplex structure which may play a role in telomere elongation. May be involved in translationally coupled mRNA turnover. Implicated with other RNA-binding proteins in the cytoplasmic deadenylation/translational and decay interplay of the FOS mRNA mediated by the major coding-region determinant of instability (mCRD) domain. May play a role in the regulation of the rhythmic expression of circadian clock core genes. Directly binds to the 3'UTR of CRY1 mRNA and induces CRY1 rhythmic translation. May also be involved in the regulation of PER2 translation. This chain is Heterogeneous nuclear ribonucleoprotein D0 (Hnrnpd), found in Rattus norvegicus (Rat).